A 359-amino-acid chain; its full sequence is MAGTTQPSAIDDILAEHAGLEQQLADPALHNDPSAARKAGKRFAELAPIMATYAKLKSAQDDLDAARELAADDSSFAAEVPELEAQVLELDKALTDLLAPRDPHDGDDVVLEVKSGEGGEESALFASDLARMYVRYAERHGWRVEILDATVSDLGGYKDATLSIKSKGDVRDGVWARLKFEGGVHRVQRVPVTESQGRVHTSAAGVLIYPEPEEVEEVQIDETDLRIDVYRSSGKGGQGVNTTDSAVRITHLPTGIVVTCQNERSQLQNKARAMQVLAARLQAAAEEAADAEASAGRQSQVRTVDRSERIRTYNFPENRITDHRIGFKSHNLDAVLDGELDALLDALGKSDREARLAAE.

Gln238 bears the N5-methylglutamine mark.

Belongs to the prokaryotic/mitochondrial release factor family. In terms of processing, methylated by PrmC. Methylation increases the termination efficiency of RF1.

It localises to the cytoplasm. Functionally, peptide chain release factor 1 directs the termination of translation in response to the peptide chain termination codons UAG and UAA. In Rhodococcus jostii (strain RHA1), this protein is Peptide chain release factor 1.